The sequence spans 357 residues: Probable leucine aminopeptidase TRV_02148.1 (357 aa).

The first 15 residues, 1 to 15 (MKVLAALALSALAMA), serve as a signal peptide directing secretion. N76 carries an N-linked (GlcNAc...) asparagine glycan. 2 residues coordinate Zn(2+): H167 and D185. The interval 169 to 188 (DSINGKNPQGEAPGADDNGS) is disordered. N-linked (GlcNAc...) asparagine glycosylation occurs at N186. Zn(2+) contacts are provided by E224 and D251. N269 carries an N-linked (GlcNAc...) asparagine glycan. C291 and C295 form a disulfide bridge. H324 contacts Zn(2+).

This sequence belongs to the peptidase M28 family. M28E subfamily. In terms of assembly, monomer. Zn(2+) serves as cofactor.

The protein resides in the secreted. Its function is as follows. Probable extracellular aminopeptidase which contributes to pathogenicity. The sequence is that of Probable leucine aminopeptidase TRV_02148.1 from Trichophyton verrucosum (strain HKI 0517).